A 224-amino-acid polypeptide reads, in one-letter code: 7-cyano-7-deazaguanine synthase (224 aa).

ATP is bound at residue 10–20 (FSGGQDSTTCL). Zn(2+) contacts are provided by Cys193, Cys201, Cys204, and Cys207.

Belongs to the QueC family. The cofactor is Zn(2+).

It catalyses the reaction 7-carboxy-7-deazaguanine + NH4(+) + ATP = 7-cyano-7-deazaguanine + ADP + phosphate + H2O + H(+). The protein operates within purine metabolism; 7-cyano-7-deazaguanine biosynthesis. Catalyzes the ATP-dependent conversion of 7-carboxy-7-deazaguanine (CDG) to 7-cyano-7-deazaguanine (preQ(0)). In Neisseria gonorrhoeae (strain ATCC 700825 / FA 1090), this protein is 7-cyano-7-deazaguanine synthase.